Reading from the N-terminus, the 371-residue chain is Alginate lyase (371 aa).

The N-terminal stretch at 1 to 28 is a signal peptide; the sequence is MRRPMTLFKRISSPALLALALFGGAAHA. Substrate-binding positions include 67-68, 140-141, and Tyr-258; these read SK and HT.

This sequence belongs to the polysaccharide lyase 5 family.

It localises to the periplasm. It carries out the reaction Eliminative cleavage of alginate to give oligosaccharides with 4-deoxy-alpha-L-erythro-hex-4-enuronosyl groups at their non-reducing ends and beta-D-mannuronate at their reducing end.. Catalyzes the depolymerization of alginate by cleaving the beta-1,4 glycosidic bond between two adjacent sugar residues via a beta-elimination mechanism. May serve to degrade mislocalized alginate that is trapped in the periplasmic space. This chain is Alginate lyase, found in Pseudomonas putida (strain ATCC 47054 / DSM 6125 / CFBP 8728 / NCIMB 11950 / KT2440).